A 713-amino-acid chain; its full sequence is MPSLSQPFRLATLPKIASLSNFSLQADYVQVADGTFNESTNNITLGISGSSISQYIINPTPKLTFDYPIPSTNIITACNAEKGQANIDGNIEASTDDEANNEKTINTQKKRNVEIWAFGLMVNKGNYTLNVITKALEDTTDTSNDHLSESDIDNKAYTGSDEFLSQYKIKAKAKVMSIKIDTKNSLVIAILQNGLIEIFDFKLTLLHSFDISYDNLKYAKWFTENGTEYVFVLCPLQDDKVCYKLLELTDCGSGESSPIKELSSTIIEGFSFENSKLCYQFGKLYKLNQGKIYIYSLPHCQLQQVIEFPMVDKLSPGDDLISFQPVSVNRVLLTVNNVIYLLDLLHCSTLSQRELTHVKTFQLLKSAVINSEKSHNSKTIAIGISTKNGPNPTSSLEIINIDVGTNTLKDSLGKSFQVGNNDSSVILKPLFDDKDINDKRVKCNDVSGDSSVPVLHCNEVIEKLSALQDNDITSFDDIFFKELKIKEEHYTEKDRYISDPGFLNKVLDLIFGKFSGNDYPKTLTFLLTHPLFPLSRTRNLLSLLRDQPRLFKQAIVTCPNLPLNELLEELFSIRNRELLLDISFRILQDFTRDSIKQEMKKLSKLDVQNFIEFITSGGEDSSPECFNPSQSTQLFQLLSLVLDSIGLFSLEGALLENLTLYIDKQVEIAERNTELWNLIDTKGFQHGFASSTFDNGTSQKRALPTYTMEYLDI.

Position 95 is a phosphothreonine (T95). Phosphoserine is present on residues S148 and S150.

As to quaternary structure, interacts with snoRNA U3. Interacts with MPP10 and UTP25. Component of the ribosomal small subunit (SSU) processome composed of at least 40 protein subunits and snoRNA U3. In the absence of snoRNA3, forms a complex with other t-UTPs. This complex can associate with pre-18S ribosomal RNAs.

It localises to the nucleus. The protein localises to the nucleolus. Involved in nucleolar processing of pre-18S ribosomal RNA. Also has a role in nuclear tRNA export. It acts between the steps of tRNA maturation/aminoacylation and its subsequent translocation out of the nucleus. Required for optimal pre-ribosomal RNA transcription by RNA polymerase I together with a subset of U3 proteins required for transcription (t-UTPs). The protein is U3 small nucleolar RNA-associated protein 8 (UTP8) of Saccharomyces cerevisiae (strain ATCC 204508 / S288c) (Baker's yeast).